The chain runs to 169 residues: MPQSPIPTTEVIIAADCWQDQPDAEDVIHRAILAAAERVDAEVGDAEIAVMLTDDAGIRTLNSNWRGIDKPTNVLSFPALQPTGPRGDDDAPRMLGDIAIAYETMRREADEEQKPFDHHLSHLTVHGFLHLIGYDHESDAEAEEMEALETEILAHLGVPDPYADRERLD.

Zn(2+) contacts are provided by His-126, His-130, and His-136.

The protein belongs to the endoribonuclease YbeY family. It depends on Zn(2+) as a cofactor.

The protein resides in the cytoplasm. Single strand-specific metallo-endoribonuclease involved in late-stage 70S ribosome quality control and in maturation of the 3' terminus of the 16S rRNA. The protein is Endoribonuclease YbeY of Bradyrhizobium sp. (strain BTAi1 / ATCC BAA-1182).